Here is a 296-residue protein sequence, read N- to C-terminus: MKQKMGTHKFRFSDMMPHSWLYKLKGMSRSSRKHHLSSPKHLSSADASSSRKLRDPLRRLSSTAHHPQASNSPPKSSSFKRKIKRKTVYKPSSRLKLSTSSSLNHRSKSSSSANAISDSAVGSFLDRVSSPSDQNFVHDPEPHSSIDIKDELSVRKLDDVPEDPSVSPNLSPETAKEPPFEMMTQQKLKKPKAHSSGIKIPTKIVRKKKKERTSQVSKKKGVVKSFAIVLSSVDPEKDFRESMVEMIMENKMREQKDLEDLLACYLSLNSSEYHDVIIKAFENTWLHLTQGLSISL.

2 disordered regions span residues 27-115 and 131-196; these read MSRS…SANA and PSDQ…AHSS. The segment covering 60–69 has biased composition (polar residues); that stretch reads LSSTAHHPQA. Positions 78-88 are enriched in basic residues; sequence SFKRKIKRKTV. The span at 92–115 shows a compositional bias: low complexity; sequence SSRLKLSTSSSLNHRSKSSSSANA. The segment covering 136–159 has biased composition (basic and acidic residues); sequence FVHDPEPHSSIDIKDELSVRKLDD. In terms of domain architecture, OVATE spans 228-287; the sequence is IVLSSVDPEKDFRESMVEMIMENKMREQKDLEDLLACYLSLNSSEYHDVIIKAFENTWLH.

In terms of assembly, interacts with BLH1, BLH3, KNAT5 and KNAT7.

The protein localises to the nucleus. In terms of biological role, transcriptional repressor that may regulate multiple aspects of plant growth and development through the regulation of BEL1-LIKE (BLH) and KNOX TALE (KNAT) homeodomain transcription factors. This Arabidopsis thaliana (Mouse-ear cress) protein is Transcription repressor OFP3 (OFP3).